A 648-amino-acid chain; its full sequence is Phosphomethylpyrimidine synthase (648 aa).

Residues N236, M265, Y294, H330, S350–G352, D391–R394, and E430 contribute to the substrate site. H434 is a Zn(2+) binding site. Y457 serves as a coordination point for substrate. H498 serves as a coordination point for Zn(2+). [4Fe-4S] cluster is bound by residues C578, C581, and C586.

It belongs to the ThiC family. As to quaternary structure, homodimer. [4Fe-4S] cluster serves as cofactor.

The catalysed reaction is 5-amino-1-(5-phospho-beta-D-ribosyl)imidazole + S-adenosyl-L-methionine = 4-amino-2-methyl-5-(phosphooxymethyl)pyrimidine + CO + 5'-deoxyadenosine + formate + L-methionine + 3 H(+). It functions in the pathway cofactor biosynthesis; thiamine diphosphate biosynthesis. Its function is as follows. Catalyzes the synthesis of the hydroxymethylpyrimidine phosphate (HMP-P) moiety of thiamine from aminoimidazole ribotide (AIR) in a radical S-adenosyl-L-methionine (SAM)-dependent reaction. In Aliivibrio salmonicida (strain LFI1238) (Vibrio salmonicida (strain LFI1238)), this protein is Phosphomethylpyrimidine synthase.